Consider the following 326-residue polypeptide: Methionyl-tRNA formyltransferase (326 aa).

(6S)-5,6,7,8-tetrahydrofolate is bound at residue 110–113; it reads SLLP. The segment at 307-326 is disordered; it reads VGTRFSPPEAPQREPAPGEA.

The protein belongs to the Fmt family.

It carries out the reaction L-methionyl-tRNA(fMet) + (6R)-10-formyltetrahydrofolate = N-formyl-L-methionyl-tRNA(fMet) + (6S)-5,6,7,8-tetrahydrofolate + H(+). Its function is as follows. Attaches a formyl group to the free amino group of methionyl-tRNA(fMet). The formyl group appears to play a dual role in the initiator identity of N-formylmethionyl-tRNA by promoting its recognition by IF2 and preventing the misappropriation of this tRNA by the elongation apparatus. The chain is Methionyl-tRNA formyltransferase from Symbiobacterium thermophilum (strain DSM 24528 / JCM 14929 / IAM 14863 / T).